The sequence spans 308 residues: Oxygen-dependent coproporphyrinogen-III oxidase (308 aa).

S94 serves as a coordination point for substrate. A divalent metal cation is bound by residues H98 and H108. H108 serves as the catalytic Proton donor. 110-112 is a binding site for substrate; the sequence is NVR. Residues H147 and H177 each contribute to the a divalent metal cation site. The interval 242 to 277 is important for dimerization; it reads YVEFNLVWDRGTLFGLQTGGRTESILMSMPPLVRWE. 260 to 262 contributes to the substrate binding site; it reads GGR.

It belongs to the aerobic coproporphyrinogen-III oxidase family. In terms of assembly, homodimer. Requires a divalent metal cation as cofactor.

The protein resides in the cytoplasm. The enzyme catalyses coproporphyrinogen III + O2 + 2 H(+) = protoporphyrinogen IX + 2 CO2 + 2 H2O. It participates in porphyrin-containing compound metabolism; protoporphyrin-IX biosynthesis; protoporphyrinogen-IX from coproporphyrinogen-III (O2 route): step 1/1. In terms of biological role, involved in the heme biosynthesis. Catalyzes the aerobic oxidative decarboxylation of propionate groups of rings A and B of coproporphyrinogen-III to yield the vinyl groups in protoporphyrinogen-IX. This chain is Oxygen-dependent coproporphyrinogen-III oxidase, found in Yersinia enterocolitica serotype O:8 / biotype 1B (strain NCTC 13174 / 8081).